Reading from the N-terminus, the 89-residue chain is Elongation factor 1-beta (89 aa).

Belongs to the EF-1-beta/EF-1-delta family.

Its function is as follows. Promotes the exchange of GDP for GTP in EF-1-alpha/GDP, thus allowing the regeneration of EF-1-alpha/GTP that could then be used to form the ternary complex EF-1-alpha/GTP/AAtRNA. The chain is Elongation factor 1-beta from Methanococcus maripaludis (strain C7 / ATCC BAA-1331).